A 505-amino-acid polypeptide reads, in one-letter code: Outer capsid protein VP5 (505 aa).

The interval 1 to 42 (MGKFTSFLKRAGNATKRALTSDSAKKMYKLAGKTLQRVVESE) is involved in membrane permeabilization.

Belongs to the orbivirus VP5 family.

The protein resides in the virion. VP5 protein is one of the two proteins (with VP2) which constitute the virus particle outer capsid. Acts as a membrane permeabilization protein that mediates release of viral particles from endosomal compartments into the cytoplasm. Permeabilization activity is probably negatively regulated by VP2 and is triggered by endosomal degradation of VP2 and exposure to low pH. This chain is Outer capsid protein VP5 (Segment-6), found in African horse sickness virus (AHSV).